The sequence spans 515 residues: Protein nucleotidyltransferase YdiU (515 aa).

Positions 101, 103, 104, 124, 136, 137, 194, and 201 each coordinate ATP. The active-site Proton acceptor is the Asp-269. The Mg(2+) site is built by Asn-270 and Asp-279. Asp-279 contacts ATP.

Belongs to the SELO family. Requires Mg(2+) as cofactor. The cofactor is Mn(2+).

The enzyme catalyses L-seryl-[protein] + ATP = 3-O-(5'-adenylyl)-L-seryl-[protein] + diphosphate. The catalysed reaction is L-threonyl-[protein] + ATP = 3-O-(5'-adenylyl)-L-threonyl-[protein] + diphosphate. It catalyses the reaction L-tyrosyl-[protein] + ATP = O-(5'-adenylyl)-L-tyrosyl-[protein] + diphosphate. It carries out the reaction L-histidyl-[protein] + UTP = N(tele)-(5'-uridylyl)-L-histidyl-[protein] + diphosphate. The enzyme catalyses L-seryl-[protein] + UTP = O-(5'-uridylyl)-L-seryl-[protein] + diphosphate. The catalysed reaction is L-tyrosyl-[protein] + UTP = O-(5'-uridylyl)-L-tyrosyl-[protein] + diphosphate. In terms of biological role, nucleotidyltransferase involved in the post-translational modification of proteins. It can catalyze the addition of adenosine monophosphate (AMP) or uridine monophosphate (UMP) to a protein, resulting in modifications known as AMPylation and UMPylation. The polypeptide is Protein nucleotidyltransferase YdiU (Cytophaga hutchinsonii (strain ATCC 33406 / DSM 1761 / CIP 103989 / NBRC 15051 / NCIMB 9469 / D465)).